The chain runs to 85 residues: Small ribosomal subunit protein uS17 (85 aa).

The protein belongs to the universal ribosomal protein uS17 family. In terms of assembly, part of the 30S ribosomal subunit.

One of the primary rRNA binding proteins, it binds specifically to the 5'-end of 16S ribosomal RNA. In Citrifermentans bemidjiense (strain ATCC BAA-1014 / DSM 16622 / JCM 12645 / Bem) (Geobacter bemidjiensis), this protein is Small ribosomal subunit protein uS17.